The chain runs to 147 residues: Allograft inflammatory factor 1 (147 aa).

Ser-2 carries the N-acetylserine modification. Position 11 is an N6-acetyllysine (Lys-11). The residue at position 39 (Ser-39) is a Phosphoserine. One can recognise an EF-hand 1 domain in the interval 45–80; that stretch reads SKLEAFKTKYMEFDLNGNGDIDIMSLKRMLEKLGVP. Asp-58, Asn-60, Asn-62, Asp-64, Glu-98, Thr-100, and Asp-105 together coordinate Ca(2+). The 35-residue stretch at 81 to 115 folds into the EF-hand 2; degenerate domain; it reads KTHLELKKLIREVSSGSEETFSYSDFLRMMLGKRS. The segment at 127-147 is disordered; it reads KNKEHQKPTGPPAKKAISELP.

Homodimer (Potential). Monomer. Interacts with LCP1. Cardiac allograft, spleen and testis. Expressed by inflammatory cells (macrophages and neutrophils).

It is found in the cytoplasm. The protein resides in the cytoskeleton. The protein localises to the cell projection. Its subcellular location is the ruffle membrane. It localises to the phagocytic cup. Functionally, actin-binding protein that enhances membrane ruffling and RAC activation. Enhances the actin-bundling activity of LCP1. Binds calcium. Plays a role in RAC signaling and in phagocytosis. May play an role in macrophage activation and function. Promotes the proliferation of vascular smooth muscle cells and of T-lymphocytes. Enhances lymphocyte migration. Plays a role in vascular inflammation. In Rattus norvegicus (Rat), this protein is Allograft inflammatory factor 1 (Aif1).